The sequence spans 98 residues: Cystatin-B (98 aa).

M1 is subject to N-acetylmethionine. A Secondary area of contact motif is present at residues 46–50; it reads QVVAG.

It belongs to the cystatin family. Able to form dimers stabilized by noncovalent forces.

It localises to the cytoplasm. It is found in the nucleus. In terms of biological role, this is an intracellular thiol proteinase inhibitor. Tightly binding reversible inhibitor of cathepsins L, H and B. The chain is Cystatin-B (CSTB) from Macaca fuscata fuscata (Japanese macaque).